The primary structure comprises 383 residues: 2-methylcitrate synthase 2 (383 aa).

Substrate contacts are provided by arginine 73 and histidine 195. The active site involves histidine 230. 263–267 (VVMGF) contacts CoA. The active site involves histidine 269. Arginine 278 provides a ligand contact to substrate. The active site involves aspartate 320. Substrate contacts are provided by arginine 345 and arginine 364.

It belongs to the citrate synthase family. As to quaternary structure, homodimer.

The catalysed reaction is propanoyl-CoA + oxaloacetate + H2O = (2S,3S)-2-methylcitrate + CoA + H(+). It carries out the reaction oxaloacetate + acetyl-CoA + H2O = citrate + CoA + H(+). It functions in the pathway organic acid metabolism; propanoate degradation. Its pathway is carbohydrate metabolism; tricarboxylic acid cycle; isocitrate from oxaloacetate: step 1/2. In terms of biological role, involved in the catabolism of short chain fatty acids (SCFA) via the tricarboxylic acid (TCA)(acetyl degradation route) and via the 2-methylcitrate cycle I (propionate degradation route). Catalyzes the Claisen condensation of propionyl-CoA and oxaloacetate (OAA) to yield 2-methylcitrate (2-MC) and CoA. Also catalyzes the condensation of oxaloacetate with acetyl-CoA but with a lower specificity. In Corynebacterium glutamicum (strain ATCC 13032 / DSM 20300 / JCM 1318 / BCRC 11384 / CCUG 27702 / LMG 3730 / NBRC 12168 / NCIMB 10025 / NRRL B-2784 / 534), this protein is 2-methylcitrate synthase 2 (prpC2).